The chain runs to 364 residues: Cobalt-precorrin-5B C(1)-methyltransferase (364 aa).

It belongs to the CbiD family.

The enzyme catalyses Co-precorrin-5B + S-adenosyl-L-methionine = Co-precorrin-6A + S-adenosyl-L-homocysteine. It participates in cofactor biosynthesis; adenosylcobalamin biosynthesis; cob(II)yrinate a,c-diamide from sirohydrochlorin (anaerobic route): step 6/10. Functionally, catalyzes the methylation of C-1 in cobalt-precorrin-5B to form cobalt-precorrin-6A. The protein is Cobalt-precorrin-5B C(1)-methyltransferase of Pseudomonas putida (strain ATCC 700007 / DSM 6899 / JCM 31910 / BCRC 17059 / LMG 24140 / F1).